A 379-amino-acid chain; its full sequence is L-demethylnoviosyl transferase (379 aa).

Belongs to the glycosyltransferase 28 family.

The enzyme catalyses dTDP-4-O-demethyl-beta-L-noviose + novobiocic acid = desmethyldescarbamoylnovobiocin + dTDP + H(+). Its pathway is antibiotic biosynthesis; novobiocin biosynthesis. Its activity is regulated as follows. Inhibited by TDP-L-rhamnose, the sugar donor that most closely structurally resembles the natural substrate dTDP-beta-L-noviose. Functionally, catalyzes the transfer of L-noviose from dTDP-4-O-demethyl-beta-L-noviose to the phenolic oxygen of novobiocic acid, creating the full ABC ring system in the novobiocin biosynthesis pathway. Novobiocin is an aminocoumarin family antibiotic that targets bacterial DNA gyrases. Also shows activity with variant coumarin aglycones, suggesting it may be a promiscuous catalyst for noviosylation of a range of planar scaffolds. Does not show activity with TDP-L-rhamnose. The chain is L-demethylnoviosyl transferase (novM) from Streptomyces niveus (Streptomyces spheroides).